A 488-amino-acid chain; its full sequence is Glutamyl-tRNA(Gln) amidotransferase subunit A (488 aa).

Catalysis depends on charge relay system residues K77 and S152. S176 serves as the catalytic Acyl-ester intermediate.

Belongs to the amidase family. GatA subfamily. In terms of assembly, heterotrimer of A, B and C subunits.

The enzyme catalyses L-glutamyl-tRNA(Gln) + L-glutamine + ATP + H2O = L-glutaminyl-tRNA(Gln) + L-glutamate + ADP + phosphate + H(+). Allows the formation of correctly charged Gln-tRNA(Gln) through the transamidation of misacylated Glu-tRNA(Gln) in organisms which lack glutaminyl-tRNA synthetase. The reaction takes place in the presence of glutamine and ATP through an activated gamma-phospho-Glu-tRNA(Gln). The sequence is that of Glutamyl-tRNA(Gln) amidotransferase subunit A from Streptococcus pneumoniae (strain 70585).